The primary structure comprises 77 residues: Translation initiation factor IF-1, chloroplastic (77 aa).

The region spanning 1 to 71 (MKEQKWIHEG…TRGRIIYRLR (71 aa)) is the S1-like domain.

It belongs to the IF-1 family. In terms of assembly, component of the 30S ribosomal translation pre-initiation complex which assembles on the 30S ribosome in the order IF-2 and IF-3, IF-1 and N-formylmethionyl-tRNA(fMet); mRNA recruitment can occur at any time during PIC assembly.

Its subcellular location is the plastid. It is found in the chloroplast. Functionally, one of the essential components for the initiation of protein synthesis. Stabilizes the binding of IF-2 and IF-3 on the 30S subunit to which N-formylmethionyl-tRNA(fMet) subsequently binds. Helps modulate mRNA selection, yielding the 30S pre-initiation complex (PIC). Upon addition of the 50S ribosomal subunit IF-1, IF-2 and IF-3 are released leaving the mature 70S translation initiation complex. The sequence is that of Translation initiation factor IF-1, chloroplastic from Montinia caryophyllacea (Wild clove bush).